Reading from the N-terminus, the 186-residue chain is Elongation factor P (186 aa).

This sequence belongs to the elongation factor P family.

It localises to the cytoplasm. The protein operates within protein biosynthesis; polypeptide chain elongation. Involved in peptide bond synthesis. Stimulates efficient translation and peptide-bond synthesis on native or reconstituted 70S ribosomes in vitro. Probably functions indirectly by altering the affinity of the ribosome for aminoacyl-tRNA, thus increasing their reactivity as acceptors for peptidyl transferase. The chain is Elongation factor P from Streptococcus gordonii (strain Challis / ATCC 35105 / BCRC 15272 / CH1 / DL1 / V288).